The chain runs to 1011 residues: MGAYARASGVCARGCLDSAGPWTMSRALRPPLPPLCFFLLLLAAAGARAGGYETCPTVQPNMLNVHLLPHTHDDVGWLKTVDQYFYGIKNDIQHAGVQYILDSVISALLADPTRRFIYVEIAFFSRWWHQQTNATQEVVRDLVRQGRLEFANGGWVMNDEAATHYGAIVDQMTLGLRFLEDTFGNDGRPRVAWHIDPFGHSREQASLFAQMGFDGFFFGRLDYQDKWVRMQKLEMEQVWRASTSLKPPTADLFTGVLPNGYNPPRNLCWDVLCVDQPLVEDPRSPEYNAKELVDYFLNVATAQGRYYRTNHTVMTMGSDFQYENANMWFKNLDKLIRLVNAQQAKGSSVHVLYSTPACYLWELNKANLTWSVKHDDFFPYADGPHQFWTGYFSSRPALKRYERLSYNFLQVCNQLEALVGLAANVGPYGSGDSAPLNEAMAVLQHHDAVSGTSRQHVANDYARQLAAGWGPCEVLLSNALARLRGFKDHFTFCQQLNISICPLSQTAARFQVIVYNPLGRKVNWMVRLPVSEGVFVVKDPNGRTVPSDVVIFPSSDSQAHPPELLFSASLPALGFSTYSVAQVPRWKPQARAPQPIPRRSWSPALTIENEHIRATFDPDTGLLMEIMNMNQQLLLPVRQTFFWYNASIGDNESDQASGAYIFRPNQQKPLPVSRWAQIHLVKTPLVQEVHQNFSAWCSQVVRLYPGQRHLELEWSVGPIPVGDTWGKEVISRFDTPLETKGRFYTDSNGREILERRRDYRPTWKLNQTEPVAGNYYPVNTRIYITDGNMQLTVLTDRSQGGSSLRDGSLELMVHRRLLKDDGRGVSEPLMENGSGAWVRGRHLVLLDTAQAAAAGHRLLAEQEVLAPQVVLAPGGGAAYNLGAPPRTQFSGLRRDLPPSVHLLTLASWGPEMVLLRLEHQFAVGEDSGRNLSAPVTLNLRDLFSTFTITRLQETTLVANQLREAASRLKWTTNTGPTPHQTPYQLDPANITLEPMEIRTFLASVQWKEVDG.

Residues 1–49 (MGAYARASGVCARGCLDSAGPWTMSRALRPPLPPLCFFLLLLAAAGARA) form the signal peptide. Disulfide bonds link cysteine 55–cysteine 358 and cysteine 268–cysteine 273. Zn(2+) contacts are provided by histidine 72 and aspartate 74. Asparagine 133 is a glycosylation site (N-linked (GlcNAc...) asparagine). Aspartate 196 contributes to the Zn(2+) binding site. Aspartate 196 functions as the Nucleophile in the catalytic mechanism. N-linked (GlcNAc...) asparagine glycans are attached at residues asparagine 310 and asparagine 367. 2 cysteine pairs are disulfide-bonded: cysteine 412/cysteine 472 and cysteine 493/cysteine 501. Histidine 446 is a Zn(2+) binding site. 8 N-linked (GlcNAc...) asparagine glycosylation sites follow: asparagine 497, asparagine 645, asparagine 651, asparagine 692, asparagine 766, asparagine 832, asparagine 930, and asparagine 989.

Belongs to the glycosyl hydrolase 38 family. Zn(2+) is required as a cofactor. In terms of processing, first processed into 3 peptides of 70 kDa, 42 kDa (D) and 13/15 kDa (E). The 70 kDa peptide is further processed into three peptides (A, B and C). The A, B and C peptides are disulfide-linked. Post-translationally, heavily glycosylated.

Its subcellular location is the lysosome. The enzyme catalyses Hydrolysis of terminal, non-reducing alpha-D-mannose residues in alpha-D-mannosides.. Necessary for the catabolism of N-linked carbohydrates released during glycoprotein turnover. Cleaves all known types of alpha-mannosidic linkages. This Homo sapiens (Human) protein is Lysosomal alpha-mannosidase (MAN2B1).